Consider the following 868-residue polypeptide: DNA mismatch repair protein MutS (868 aa).

620–627 contacts ATP; that stretch reads GPNMGGKS.

The protein belongs to the DNA mismatch repair MutS family.

In terms of biological role, this protein is involved in the repair of mismatches in DNA. It is possible that it carries out the mismatch recognition step. This protein has a weak ATPase activity. The protein is DNA mismatch repair protein MutS of Desulforamulus reducens (strain ATCC BAA-1160 / DSM 100696 / MI-1) (Desulfotomaculum reducens).